A 120-amino-acid chain; its full sequence is Large ribosomal subunit protein bL17 (120 aa).

This sequence belongs to the bacterial ribosomal protein bL17 family. In terms of assembly, part of the 50S ribosomal subunit. Contacts protein L32.

This chain is Large ribosomal subunit protein bL17, found in Mycoplasmopsis synoviae (strain 53) (Mycoplasma synoviae).